The following is a 389-amino-acid chain: Capsule polysaccharide export protein KpsS (389 aa).

In Escherichia coli, this protein is Capsule polysaccharide export protein KpsS (kpsS).